We begin with the raw amino-acid sequence, 731 residues long: Inclusion body clearance protein IML2 (731 aa).

Residues 1–26 are disordered; sequence MFRVFGSFGSKGNQSSGEEQSTKTKQ. Residues 10-26 are compositionally biased toward polar residues; it reads SKGNQSSGEEQSTKTKQ. Phosphoserine is present on residues Ser265, Ser268, and Ser378. Thr380 bears the Phosphothreonine mark. Phosphoserine is present on residues Ser383 and Ser392.

The protein belongs to the IML2 family. In terms of assembly, interacts with lipid droplet proteins PET10 and PDR16.

It is found in the cytoplasm. The protein localises to the nucleus. Inclusion body (IB) resident protein that interacts strongly with lipid droplet (LD) proteins. Involved in LD-mediated IB clearing after protein folding stress, probably by enabling access to the IBs of an LD-stored soluble sterol derivative that acts as a chaperone in inclusion clearing. The chain is Inclusion body clearance protein IML2 from Saccharomyces cerevisiae (strain ATCC 204508 / S288c) (Baker's yeast).